The chain runs to 441 residues: Protein arginine methyltransferase NDUFAF7, mitochondrial (441 aa).

The N-terminal 46 residues, 1-46 (MNFLAAAGVRRLCAMRAVLPCLWRGKYFSSGNEPAENNTVTPMLRH), are a transit peptide targeting the mitochondrion. Positions 415–434 (GRNHQTNARQSKPSPSPVAG) are disordered. Residues 418 to 427 (HQTNARQSKP) show a composition bias toward polar residues.

Belongs to the NDUFAF7 family. As to quaternary structure, interacts with NDUFS2.

It localises to the mitochondrion. The enzyme catalyses L-arginyl-[protein] + 2 S-adenosyl-L-methionine = N(omega),N(omega)'-dimethyl-L-arginyl-[protein] + 2 S-adenosyl-L-homocysteine + 2 H(+). Functionally, arginine methyltransferase involved in the assembly or stability of mitochondrial NADH:ubiquinone oxidoreductase complex (complex I). Acts by mediating symmetric dimethylation of 'Arg-118' of NDUFS2 after it assembles into the complex I, stabilizing the early intermediate complex. The protein is Protein arginine methyltransferase NDUFAF7, mitochondrial of Bos taurus (Bovine).